Consider the following 725-residue polypeptide: Kelch domain-containing protein SSO1033 (725 aa).

The N-terminal stretch at 1–28 (MKYGNMKKWAPLILFLFSLLLLQGISLH) is a signal peptide. Kelch repeat units lie at residues 59 to 100 (SLYI…VYNN), 101 to 145 (TIYV…VYNN), 146 to 199 (AIYV…FNGT), 201 to 248 (LIIV…YYRG), 250 to 297 (LFIV…QVGN), and 299 to 342 (LYLA…VTLG). Fibronectin type-III domains lie at 323–410 (PPLP…TPAS), 411–504 (VPNP…TKAS), 505–583 (VFAF…VVYY), and 585–665 (PPAS…TGDY).

In Saccharolobus solfataricus (strain ATCC 35092 / DSM 1617 / JCM 11322 / P2) (Sulfolobus solfataricus), this protein is Kelch domain-containing protein SSO1033.